A 253-amino-acid polypeptide reads, in one-letter code: Putative tyrosine-protein phosphatase OCA1 (253 aa).

Residues 1–21 (MHRTSIVEELERHQQDQKADQ) are compositionally biased toward basic and acidic residues. A disordered region spans residues 1–84 (MHRTSIVEEL…PRMKTIVKPP (84 aa)). Residues 27-65 (SDASNSALQESSDPRLSTTDNTNTPEINVNDQQQEQQVA) are compositionally biased toward polar residues. Residues 93 to 249 (NFGPVERNLY…IIVYPESAPE (157 aa)) form the Tyrosine-protein phosphatase domain. The Phosphocysteine intermediate role is filled by Cys-186.

Belongs to the protein-tyrosine phosphatase family.

The protein localises to the cytoplasm. It carries out the reaction O-phospho-L-tyrosyl-[protein] + H2O = L-tyrosyl-[protein] + phosphate. In terms of biological role, putative tyrosine-protein phosphatase required for protection against superoxide stress. The chain is Putative tyrosine-protein phosphatase OCA1 (OCA1) from Yarrowia lipolytica (strain CLIB 122 / E 150) (Yeast).